Consider the following 279-residue polypeptide: UPF0276 protein SO_2008 (279 aa).

The protein belongs to the UPF0276 family.

This is UPF0276 protein SO_2008 from Shewanella oneidensis (strain ATCC 700550 / JCM 31522 / CIP 106686 / LMG 19005 / NCIMB 14063 / MR-1).